Here is a 516-residue protein sequence, read N- to C-terminus: Bifunctional purine biosynthesis protein PurH (516 aa).

The region spanning 1 to 146 (MTRLALLSVS…KNYAHVTVLS (146 aa)) is the MGS-like domain.

This sequence belongs to the PurH family.

It catalyses the reaction (6R)-10-formyltetrahydrofolate + 5-amino-1-(5-phospho-beta-D-ribosyl)imidazole-4-carboxamide = 5-formamido-1-(5-phospho-D-ribosyl)imidazole-4-carboxamide + (6S)-5,6,7,8-tetrahydrofolate. The enzyme catalyses IMP + H2O = 5-formamido-1-(5-phospho-D-ribosyl)imidazole-4-carboxamide. The protein operates within purine metabolism; IMP biosynthesis via de novo pathway; 5-formamido-1-(5-phospho-D-ribosyl)imidazole-4-carboxamide from 5-amino-1-(5-phospho-D-ribosyl)imidazole-4-carboxamide (10-formyl THF route): step 1/1. It participates in purine metabolism; IMP biosynthesis via de novo pathway; IMP from 5-formamido-1-(5-phospho-D-ribosyl)imidazole-4-carboxamide: step 1/1. The protein is Bifunctional purine biosynthesis protein PurH of Rippkaea orientalis (strain PCC 8801 / RF-1) (Cyanothece sp. (strain PCC 8801)).